We begin with the raw amino-acid sequence, 135 residues long: MAGRGKAIGAGAAKKATSRSSKGGLQFPVGRIARFLKAGKYAERVGAGAPVYLAAVLEYLAAEVLELAGNAARDNKKTRIVPRHIQLAVRNDEELTKLLGGATIASGGVMPNIHQHLLPKKAGSSKASHADDDDN.

It belongs to the histone H2A family. The nucleosome is a histone octamer containing two molecules each of H2A, H2B, H3 and H4 assembled in one H3-H4 heterotetramer and two H2A-H2B heterodimers. The octamer wraps approximately 147 bp of DNA.

The protein localises to the nucleus. It localises to the chromosome. Functionally, core component of nucleosome. Nucleosomes wrap and compact DNA into chromatin, limiting DNA accessibility to the cellular machineries which require DNA as a template. Histones thereby play a central role in transcription regulation, DNA repair, DNA replication and chromosomal stability. DNA accessibility is regulated via a complex set of post-translational modifications of histones, also called histone code, and nucleosome remodeling. The protein is Probable histone H2A.8 of Oryza sativa subsp. indica (Rice).